A 296-amino-acid polypeptide reads, in one-letter code: Iron-sulfur cluster carrier protein (296 aa).

Low complexity predominate over residues Met1–Arg17. The disordered stretch occupies residues Met1–Arg23. An ATP-binding site is contributed by Gly52–Ser59.

Belongs to the Mrp/NBP35 ATP-binding proteins family. In terms of assembly, homodimer.

Its function is as follows. Binds and transfers iron-sulfur (Fe-S) clusters to target apoproteins. Can hydrolyze ATP. In Saccharolobus solfataricus (strain ATCC 35092 / DSM 1617 / JCM 11322 / P2) (Sulfolobus solfataricus), this protein is Iron-sulfur cluster carrier protein.